We begin with the raw amino-acid sequence, 248 residues long: Protein-lysine N-methyltransferase EFM5 (248 aa).

The protein belongs to the class I-like SAM-binding methyltransferase superfamily. EFM5 family.

It is found in the cytoplasm. In terms of biological role, S-adenosyl-L-methionine-dependent protein-lysine N-methyltransferase that trimethylates elongation factor 1-alpha (TEF1 and TEF2) at 'Lys-79'. Required for replication of Brome mosaic virus (BMV). The chain is Protein-lysine N-methyltransferase EFM5 from Saccharomyces cerevisiae (strain ATCC 204508 / S288c) (Baker's yeast).